Here is a 210-residue protein sequence, read N- to C-terminus: Troponin I, cardiac muscle (210 aa).

Residues 1-43 (MADGSSDAAREPRPAPAPIRRRSSNYRAYATEPHAKKKSKISA) form a disordered region. An N-acetylalanine modification is found at Ala2. Phosphoserine is present on residues Ser5 and Ser6. Phosphoserine; by PKA and PKD/PRKD1 occurs at positions 23 and 24. Tyr26 carries the phosphotyrosine modification. Thr31 carries the post-translational modification Phosphothreonine; by STK4/MST1. Positions 32–79 (EPHAKKKSKISASRKLQLKTLLLQIAKQELEREAEERRGEKGRALSTR) are involved in binding TNC. 2 positions are modified to phosphoserine; by PKC/PRKCE: Ser42 and Ser44. Thr51 is subject to Phosphothreonine; by STK4/MST1. Ser77 bears the Phosphoserine mark. Phosphothreonine is present on Thr78. Thr129 and Thr143 each carry phosphothreonine; by STK4/MST1. The segment at 129 to 149 (TQKIFDLRGKFKRPTLRRVRI) is involved in binding TNC and actin. The residue at position 150 (Ser150) is a Phosphoserine; by PAK3. The residue at position 166 (Ser166) is a Phosphoserine. Thr181 is modified (phosphothreonine). Ser199 is modified (phosphoserine).

Belongs to the troponin I family. In terms of assembly, binds to actin and tropomyosin. Interacts with TRIM63. Interacts with STK4/MST1. Phosphorylated at Ser-42 and Ser-44 by PRKCE; phosphorylation increases myocardium contractile dysfunction. Phosphorylated at Ser-23 and Ser-24 by PRKD1; phosphorylation reduces myofilament calcium sensitivity. Phosphorylated preferentially at Thr-31. Phosphorylation by STK4/MST1 alters its binding affinity to TNNC1 (cardiac Tn-C) and TNNT2 (cardiac Tn-T).

In terms of biological role, troponin I is the inhibitory subunit of troponin, the thin filament regulatory complex which confers calcium-sensitivity to striated muscle actomyosin ATPase activity. The sequence is that of Troponin I, cardiac muscle (TNNI3) from Homo sapiens (Human).